Consider the following 423-residue polypeptide: MWLDDVASELSFTQGLLLGQLSIVILIGAFIKFFIFGDPPSPDVSAALRATERRSRTLAHKRSLLTLRSSTPRHASQSLNRKRSSVLRNPAPLTTNAILSKTYYNVDSHQPESLDWFNVLIAQTIAQFRADAQHDDAILTSLTKALNGGNRPDFLDEIKVTELSLGEDFPIFSNCRVIPVDEDGITLGREGGAAGREHGRLQARMDVDLSDFITLAVETKLLLNYPKPLVAVLPVALAVSVMRFSGTLSISFVPGSPLNGSPTTLAFCFLDDYRLDLSIRSLVGSRSRLQDVPKIAQLIEARLHTWFDERCVEPRFQQIELPSLWPRKKNTRGGEDLDTGSEAGGIGRARSRDVERDLREEARKEVEAETGVRVGRSKLGVSLDVPDVGLDGGSEEGLRFRRRSRGRGDEYAMPGSMPGLSMA.

Residues 1–15 (MWLDDVASELSFTQG) are Lumenal-facing. A helical membrane pass occupies residues 16-36 (LLLGQLSIVILIGAFIKFFIF). Residues 37-423 (GDPPSPDVSA…PGSMPGLSMA (387 aa)) lie on the Cytoplasmic side of the membrane. The SMP-LTD domain maps to 110 to 322 (QPESLDWFNV…EPRFQQIELP (213 aa)). Disordered stretches follow at residues 327 to 370 (RKKN…EAET) and 394 to 423 (SEEGLRFRRRSRGRGDEYAMPGSMPGLSMA). The span at 350-367 (RSRDVERDLREEARKEVE) shows a compositional bias: basic and acidic residues.

This sequence belongs to the MMM1 family. As to quaternary structure, homodimer. Component of the ER-mitochondria encounter structure (ERMES) or MDM complex, composed of mmm1, mdm10, mdm12 and mdm34. A mmm1 homodimer associates with one molecule of mdm12 on each side in a pairwise head-to-tail manner, and the SMP-LTD domains of mmm1 and mdm12 generate a continuous hydrophobic tunnel for phospholipid trafficking.

It localises to the endoplasmic reticulum membrane. Functionally, component of the ERMES/MDM complex, which serves as a molecular tether to connect the endoplasmic reticulum (ER) and mitochondria. Components of this complex are involved in the control of mitochondrial shape and protein biogenesis, and function in nonvesicular lipid trafficking between the ER and mitochondria. The mdm12-mmm1 subcomplex functions in the major beta-barrel assembly pathway that is responsible for biogenesis of all outer membrane beta-barrel proteins, and acts in a late step after the SAM complex. The mdm10-mdm12-mmm1 subcomplex further acts in the TOM40-specific pathway after the action of the mdm12-mmm1 complex. Essential for establishing and maintaining the structure of mitochondria and maintenance of mtDNA nucleoids. The sequence is that of Maintenance of mitochondrial morphology protein 1 from Sclerotinia sclerotiorum (strain ATCC 18683 / 1980 / Ss-1) (White mold).